We begin with the raw amino-acid sequence, 318 residues long: Pantothenate synthetase (318 aa).

44-51 is an ATP binding site; it reads MGALHQGH. The active-site Proton donor is His-51. Gln-75 lines the (R)-pantoate pocket. Gln-75 is a beta-alanine binding site. Residue 161–164 coordinates ATP; the sequence is GEKD. Gln-167 contributes to the (R)-pantoate binding site. Residues Val-190 and 198–201 contribute to the ATP site; that span reads LSSR. The segment at 295 to 318 is disordered; that stretch reads DGHPNLDSQPEPAGTDPALLPPAR.

This sequence belongs to the pantothenate synthetase family. In terms of assembly, homodimer.

Its subcellular location is the cytoplasm. It catalyses the reaction (R)-pantoate + beta-alanine + ATP = (R)-pantothenate + AMP + diphosphate + H(+). The protein operates within cofactor biosynthesis; (R)-pantothenate biosynthesis; (R)-pantothenate from (R)-pantoate and beta-alanine: step 1/1. Functionally, catalyzes the condensation of pantoate with beta-alanine in an ATP-dependent reaction via a pantoyl-adenylate intermediate. This chain is Pantothenate synthetase, found in Nocardia farcinica (strain IFM 10152).